Here is a 322-residue protein sequence, read N- to C-terminus: ATP-dependent 6-phosphofructokinase (322 aa).

Gly-12 contributes to the ATP binding site. ADP is bound at residue 22–26 (RATAK). ATP contacts are provided by residues 73 to 74 (RS) and 103 to 106 (GDGS). Asp-104 is a binding site for Mg(2+). 127 to 129 (TID) serves as a coordination point for substrate. Catalysis depends on Asp-129, which acts as the Proton acceptor. Position 156 (Arg-156) interacts with ADP. Substrate contacts are provided by residues Arg-164 and 171-173 (MGR). ADP contacts are provided by residues 187-189 (GGD) and 215-217 (KLH). Substrate is bound by residues Glu-224, Arg-245, and 251–254 (HIQR).

It belongs to the phosphofructokinase type A (PFKA) family. ATP-dependent PFK group I subfamily. Prokaryotic clade 'B1' sub-subfamily. As to quaternary structure, homotetramer. The cofactor is Mg(2+).

The protein localises to the cytoplasm. The catalysed reaction is beta-D-fructose 6-phosphate + ATP = beta-D-fructose 1,6-bisphosphate + ADP + H(+). Its pathway is carbohydrate degradation; glycolysis; D-glyceraldehyde 3-phosphate and glycerone phosphate from D-glucose: step 3/4. Its activity is regulated as follows. Allosterically activated by ADP and other diphosphonucleosides, and allosterically inhibited by phosphoenolpyruvate. Catalyzes the phosphorylation of D-fructose 6-phosphate to fructose 1,6-bisphosphate by ATP, the first committing step of glycolysis. This is ATP-dependent 6-phosphofructokinase from Fusobacterium nucleatum subsp. nucleatum (strain ATCC 25586 / DSM 15643 / BCRC 10681 / CIP 101130 / JCM 8532 / KCTC 2640 / LMG 13131 / VPI 4355).